We begin with the raw amino-acid sequence, 107 residues long: uncharacterized protein (107 aa).

This is an uncharacterized protein from Saccharomyces cerevisiae (strain ATCC 204508 / S288c) (Baker's yeast).